The sequence spans 284 residues: Bifunctional protein FolD (284 aa).

Residues 165-167 (GRS), serine 190, and isoleucine 231 each bind NADP(+).

It belongs to the tetrahydrofolate dehydrogenase/cyclohydrolase family. In terms of assembly, homodimer.

The catalysed reaction is (6R)-5,10-methylene-5,6,7,8-tetrahydrofolate + NADP(+) = (6R)-5,10-methenyltetrahydrofolate + NADPH. It carries out the reaction (6R)-5,10-methenyltetrahydrofolate + H2O = (6R)-10-formyltetrahydrofolate + H(+). The protein operates within one-carbon metabolism; tetrahydrofolate interconversion. In terms of biological role, catalyzes the oxidation of 5,10-methylenetetrahydrofolate to 5,10-methenyltetrahydrofolate and then the hydrolysis of 5,10-methenyltetrahydrofolate to 10-formyltetrahydrofolate. This chain is Bifunctional protein FolD, found in Streptococcus thermophilus (strain ATCC BAA-250 / LMG 18311).